The chain runs to 243 residues: I/6 autoantigen (243 aa).

One can recognise an EF-hand domain in the interval 110-145 (LSVEEVDALFNALDSDNRGYVSVDEFMDALYGEEGR). A disordered region spans residues 166-243 (PSWRMRPTPK…PPKQKAGCGC (78 aa)). Residues 176 to 196 (PTRKLRQKRKREQGQKRKQGQ) show a composition bias toward basic residues. Tandem repeats lie at residues 181–188 (RQKRKREQ), 189–196 (GQKRKQGQ), 197–204 (RQKQEQGQ), 205–212 (RQKREQGQ), 213–220 (RQKQEQGQ), and 221–228 (KRKRERGG). A 6 X 8 AA tandem repeats region spans residues 181-228 (RQKRKREQGQKRKQGQRQKQEQGQRQKREQGQRQKQEQGQKRKRERGG). Residues 198 to 220 (QKQEQGQRQKREQGQRQKQEQGQ) are compositionally biased toward basic and acidic residues.

The protein resides in the cytoplasm. Its subcellular location is the cytoskeleton. In terms of biological role, microtubule-associated protein that may be involved in cross-linking microtubules. This is I/6 autoantigen from Trypanosoma brucei brucei.